The following is a 440-amino-acid chain: C4-dicarboxylate transport protein (440 aa).

Transmembrane regions (helical) follow at residues 8-28 (LYLQ…LFPA), 40-60 (FIKL…VTGI), 74-94 (LKGL…GLVV), 147-167 (GDIL…AALK), 187-207 (IVGF…AFTV), 221-241 (LIAC…GLVL), 288-308 (VVGL…SIYL), and 354-374 (AATL…LLGV). Positions 419 to 440 (EEVEPANEPEPPAVPAGAGLHG) are disordered.

This sequence belongs to the dicarboxylate/amino acid:cation symporter (DAACS) (TC 2.A.23) family.

Its subcellular location is the cell inner membrane. Responsible for the transport of dicarboxylates such as succinate, fumarate, and malate from the periplasm across the membrane. This chain is C4-dicarboxylate transport protein, found in Anaeromyxobacter dehalogenans (strain 2CP-1 / ATCC BAA-258).